Reading from the N-terminus, the 194-residue chain is Peptidyl-tRNA hydrolase (194 aa).

Tyr17 lines the tRNA pocket. His22 serves as the catalytic Proton acceptor. TRNA is bound by residues Tyr68, Asn70, and Asn116.

It belongs to the PTH family. As to quaternary structure, monomer.

It localises to the cytoplasm. It catalyses the reaction an N-acyl-L-alpha-aminoacyl-tRNA + H2O = an N-acyl-L-amino acid + a tRNA + H(+). Its function is as follows. Hydrolyzes ribosome-free peptidyl-tRNAs (with 1 or more amino acids incorporated), which drop off the ribosome during protein synthesis, or as a result of ribosome stalling. Catalyzes the release of premature peptidyl moieties from peptidyl-tRNA molecules trapped in stalled 50S ribosomal subunits, and thus maintains levels of free tRNAs and 50S ribosomes. In Chromohalobacter salexigens (strain ATCC BAA-138 / DSM 3043 / CIP 106854 / NCIMB 13768 / 1H11), this protein is Peptidyl-tRNA hydrolase.